The following is a 307-amino-acid chain: MWRMSHSLPSGMSRYAFSPQDTDFTSSYPGPSAMNHRGGRGGGYNDFSGGGSAMGSMCNMAPAISTNSVNSGGGDCGDNQGCNGTNLIVNYLPQDMTDRELYALFRTCGPINTCRIMKDYKTGYSFGYAFVDFASEIDAQNAIKSLNGVTVRNKRLKVSYARPGGESIKDTNLYVTNLPRTITDDELEKIFGKYGNIVQKNILRDKLTGKPRGVAFVRFNKREEAQEAISALNNVIPEGASQPLTVRLAEEHGKMKAHHFMNQLGMGPPAAPIPAAGPGYNSMVHRGRHNKNRNQKPHPYHNPQKFI.

RRM domains are found at residues 85 to 163 (TNLI…YARP) and 171 to 251 (TNLY…LAEE). Over residues 285–299 (HRGRHNKNRNQKPHP) the composition is skewed to basic residues. Residues 285–307 (HRGRHNKNRNQKPHPYHNPQKFI) are disordered.

It localises to the nucleus. Its function is as follows. Unknown; apparently not involved in somatic sex determination. This Chrysomya rufifacies (Hairy maggot blowfly) protein is Sex-lethal homolog (SXL).